The following is a 221-amino-acid chain: Interleukin-12 subunit alpha (221 aa).

Positions 1 to 25 (MCPLRSLLLLSTLVLLHHLPHLSLG) are cleaved as a signal peptide. 3 cysteine pairs are disulfide-bonded: cysteine 39–cysteine 112, cysteine 66–cysteine 198, and cysteine 87–cysteine 125. Residues asparagine 41 and asparagine 95 are each glycosylated (N-linked (GlcNAc...) asparagine).

This sequence belongs to the IL-6 superfamily. As to quaternary structure, heterodimer with IL12B; disulfide-linked. This heterodimer is known as interleukin IL-12. Heterodimer with EBI3/IL27B; not disulfide-linked. This heterodimer is known as interleukin IL-35. Interacts with NBR1; this interaction promotes IL-12 secretion.

The protein localises to the secreted. Heterodimerizes with IL12B to form the IL-12 cytokine or with EBI3/IL27B to form the IL-35 cytokine. IL-12 is primarily produced by professional antigen-presenting cells (APCs) such as B-cells and dendritic cells (DCs) as well as macrophages and granulocytes and regulates T-cell and natural killer-cell responses, induces the production of interferon-gamma (IFN-gamma), favors the differentiation of T-helper 1 (Th1) cells and is an important link between innate resistance and adaptive immunity. Mechanistically, exerts its biological effects through a receptor composed of IL12R1 and IL12R2 subunits. Binding to the receptor results in the rapid tyrosine phosphorylation of a number of cellular substrates including the JAK family kinases TYK2 and JAK2. In turn, recruited STAT4 gets phosphorylated and translocates to the nucleus where it regulates cytokine/growth factor responsive genes. As part of IL-35, plays essential roles in maintaining the immune homeostasis of the liver microenvironment and also functions as an immune-suppressive cytokine. Mediates biological events through unconventional receptors composed of IL12RB2 and gp130/IL6ST heterodimers or homodimers. Signaling requires the transcription factors STAT1 and STAT4, which form a unique heterodimer that binds to distinct DNA sites. The protein is Interleukin-12 subunit alpha (IL12A) of Cervus elaphus (Red deer).